The primary structure comprises 282 residues: Bis(5'-nucleosyl)-tetraphosphatase, symmetrical (282 aa).

It belongs to the Ap4A hydrolase family.

It catalyses the reaction P(1),P(4)-bis(5'-adenosyl) tetraphosphate + H2O = 2 ADP + 2 H(+). Functionally, hydrolyzes diadenosine 5',5'''-P1,P4-tetraphosphate to yield ADP. This Citrobacter koseri (strain ATCC BAA-895 / CDC 4225-83 / SGSC4696) protein is Bis(5'-nucleosyl)-tetraphosphatase, symmetrical.